The chain runs to 3102 residues: Laminin subunit alpha lam-3 (3102 aa).

The N-terminal stretch at 1-16 (MRLWLGLLAVSNIALG) is a signal peptide. N19, N135, and N237 each carry an N-linked (GlcNAc...) asparagine glycan. Residues 44-295 (SERGLFPNIF…SISDISIGGQ (252 aa)) enclose the Laminin N-terminal domain. Disulfide bonds link C296–C305, C298–C316, C318–C327, C330–C350, C353–C362, C355–C387, C390–C399, C402–C420, C423–C435, C425–C451, C453–C462, C465–C475, C478–C491, C480–C496, C498–C507, and C510–C525. Laminin EGF-like domains follow at residues 296-352 (CICY…VCQQ), 353-422 (CQCF…ACRT), 423-477 (CECD…TCEP), and 478-527 (CPCN…GCQP). The Laminin IV type A 1 domain maps to 548–740 (INNIGWHLTD…QDTLMGGVEV (193 aa)). Cystine bridges form between C774-C783, C776-C790, C793-C802, C805-C822, C825-C838, C827-C858, C861-C870, C873-C886, C889-C903, C891-C910, C913-C922, C925-C938, C941-C953, C943-C960, C962-C971, C974-C985, C988-C1000, C990-C1007, C1009-C1018, C1021-C1033, C1036-C1049, C1038-C1056, C1058-C1067, C1070-C1083, C1086-C1098, C1088-C1105, C1107-C1116, C1119-C1131, C1134-C1144, C1137-C1151, and C1153-C1162. Laminin EGF-like domains lie at 774 to 824 (CDCH…ACEQ), 825 to 888 (CECP…KCIE), 889 to 940 (CTCN…TCKP), 941 to 987 (CGCH…GCPA), 988 to 1035 (CDCN…GCQF), 1036 to 1085 (CHCN…GCED), 1086 to 1133 (CGCD…GCTE), 1134 to 1180 (CEPC…GCKL), 1181 to 1226 (CDCS…TCEP), and 1227 to 1283 (CGCN…GCTE). N-linked (GlcNAc...) asparagine glycosylation occurs at N796. Residue N991 is glycosylated (N-linked (GlcNAc...) asparagine). An N-linked (GlcNAc...) asparagine glycan is attached at N1027. N-linked (GlcNAc...) asparagine glycosylation is present at N1076. A glycan (N-linked (GlcNAc...) asparagine) is linked at N1164. Disulfide bonds link C1165–C1178, C1181–C1193, C1183–C1200, C1202–C1211, C1214–C1224, C1227–C1246, C1229–C1252, C1254–C1263, and C1266–C1281. A glycan (N-linked (GlcNAc...) asparagine) is linked at N1288. The Laminin IV type A 2 domain maps to 1295-1496 (QSDLVWQQMY…STTKAIGVEK (202 aa)). 12 disulfides stabilise this stretch: C1540–C1549, C1542–C1556, C1559–C1568, C1571–C1587, C1590–C1603, C1592–C1614, C1617–C1626, C1629–C1644, C1647–C1659, C1649–C1666, C1668–C1677, and C1680–C1691. 3 Laminin EGF-like domains span residues 1540-1589 (CSCH…ACTK), 1590-1646 (CACP…TCSP), and 1647-1693 (CDCH…VCTS). N-linked (GlcNAc...) asparagine glycans are attached at residues N1717, N1734, N1777, N1806, N1839, N1875, N1969, N1984, and N2048. Residues 2061-2084 (EAVSKMLGSEGSESGDANEESLRS) form a disordered region. N-linked (GlcNAc...) asparagine glycosylation is found at N2091, N2193, N2369, and N2479. Laminin G-like domains follow at residues 2467–2644 (SQRG…TDGC), 2652–2839 (DKII…IGMC), and 2913–3088 (RYGL…AKAC). Residues C2617 and C2644 are joined by a disulfide bond. Residues N2672 and N2686 are each glycosylated (N-linked (GlcNAc...) asparagine). Residues C2814 and C2839 are joined by a disulfide bond. N-linked (GlcNAc...) asparagine glycosylation is found at N2932, N2959, and N3007. Cysteines 3058 and 3088 form a disulfide.

In terms of assembly, laminin is a complex glycoprotein, consisting of three different polypeptide chains (alpha, beta, gamma), which are bound to each other by disulfide bonds into a cross-shaped molecule comprising one long and three short arms with globules at each end.

It is found in the secreted. The protein resides in the extracellular space. Its subcellular location is the extracellular matrix. The protein localises to the basement membrane. Its function is as follows. Binding to cells via a high affinity receptor, laminin is thought to mediate the attachment, migration and organization of cells into tissues during embryonic development by interacting with other extracellular matrix components. Required to assemble a stable basement membrane and for organizing receptor complexes and cytoskeletal components to the proper cell surfaces. During embryogenesis, does not require the presence of collagen type IV in order to associate with cell surfaces, prior to assembly of the prototypical basement membrane. Plays an important role in muscle contraction of the body. Probably plays a distinct role from the related laminin subunit alpha epi-1. This Caenorhabditis elegans protein is Laminin subunit alpha lam-3.